The chain runs to 166 residues: Large ribosomal subunit protein uL10 (166 aa).

The protein belongs to the universal ribosomal protein uL10 family. In terms of assembly, part of the ribosomal stalk of the 50S ribosomal subunit. The N-terminus interacts with L11 and the large rRNA to form the base of the stalk. The C-terminus forms an elongated spine to which L12 dimers bind in a sequential fashion forming a multimeric L10(L12)X complex.

Functionally, forms part of the ribosomal stalk, playing a central role in the interaction of the ribosome with GTP-bound translation factors. The polypeptide is Large ribosomal subunit protein uL10 (Marinomonas sp. (strain MWYL1)).